The following is a 610-amino-acid chain: Transducer of Cdc42-dependent actin assembly protein 2 homolog (610 aa).

Residues 1 to 267 (MIPVSRFFTV…EVGKIDAEGD (267 aa)) form the F-BAR domain. Positions 283-315 (APFEIEDLGDPKNCDSRTNDSADGSGGKLLKSS) are disordered. Residues 291-302 (GDPKNCDSRTND) show a composition bias toward basic and acidic residues. Residues 352-429 (SKPAHVRLSC…IHNLKEFYAM (78 aa)) enclose the REM-1 domain. Positions 355-385 (AHVRLSCLRSKIRDMEKQLEQAIQGREGITR) form a coiled coil. Disordered regions lie at residues 436-487 (EGQE…SSKN) and 499-519 (LISSPKTSKSSTPTPLRRRAE). The segment covering 437-449 (GQERSFGGRDTPD) has biased composition (basic and acidic residues). The segment covering 453–464 (SMSGSSTNQSSS) has biased composition (low complexity). Positions 475–487 (AGNSSSADDSSKN) are enriched in polar residues. Low complexity predominate over residues 501-513 (SSPKTSKSSTPTP). The SH3 domain occupies 547 to 610 (ETAVTVTALF…VPTSYLQFPQ (64 aa)).

This sequence belongs to the FNBP1 family. In terms of assembly, interacts (via SH3 domain) with wsp-1 and abi-1. Interacts with cdc-42 and (via SH3 domain) with wve-1.

It localises to the cell junction. The protein resides in the cell membrane. It is found in the cytoplasmic vesicle. The protein localises to the cytoplasm. Its subcellular location is the recycling endosome. Functionally, plays a role in protein trafficking, actin organization and embryonic morphogenesis. Potentially acts as a cdc-42 effector. May play a role in egg laying. Together with toca-1, is required for protein trafficking regulating yolk protein clathrin-mediated endocytosis by oocytes during oogenesis and retrograde recycling and the sorting of recycling endosome cargo proteins such as mig-14. Also, together with toca-2, controls the distribution of actin at cell junctions. This is Transducer of Cdc42-dependent actin assembly protein 2 homolog from Caenorhabditis elegans.